An 87-amino-acid chain; its full sequence is MSNFSGFTKGNDIADLDAVAQTLKKPADDANKAVNDSIAALKDTPDNPALLADLQHSINKWSVIYNISSTIVRSMKDLMQGILQKFP.

The protein belongs to the SctF family. In terms of assembly, the core secretion machinery of the T3SS is composed of approximately 20 different proteins, including cytoplasmic components, a base, an export apparatus and a needle. This subunit polymerizes and forms the helical needle filament. In Y.enterocolitica E40, the needles are composed of 139 (plus-minus 19) YscF/SctF subunits.

The protein resides in the secreted. The protein localises to the cell surface. Its activity is regulated as follows. The secretion and/or polymerization may be controlled by the type III secretion system regulator YopR. Its function is as follows. Component of the type III secretion system (T3SS), also called injectisome, which is used to inject bacterial effector proteins into eukaryotic host cells. YscF/SctF forms the external needle filament that protrudes from the bacterial surface. The needle is not sufficient by itself for the formation of a pore allowing translocation of the Yop effectors across the host cell membrane. The polypeptide is Type 3 secretion system needle filament protein (Yersinia enterocolitica).